Here is a 196-residue protein sequence, read N- to C-terminus: Small ribosomal subunit protein uS4c (196 aa).

A disordered region spans residues 17–36 (ALPGLTRKTPKSGSNLKKKF). The S4 RNA-binding domain maps to 89–157 (MRLDNILFRL…VQNYIASSDP (69 aa)).

It belongs to the universal ribosomal protein uS4 family. In terms of assembly, part of the 30S ribosomal subunit. Contacts protein S5. The interaction surface between S4 and S5 is involved in control of translational fidelity.

The protein localises to the plastid. It is found in the chloroplast. Functionally, one of the primary rRNA binding proteins, it binds directly to 16S rRNA where it nucleates assembly of the body of the 30S subunit. Its function is as follows. With S5 and S12 plays an important role in translational accuracy. The sequence is that of Small ribosomal subunit protein uS4c (rps4) from Calamagrostis epigeios (Wood small-reed grass).